The sequence spans 89 residues: Small ribosomal subunit protein uS14A (89 aa).

The protein belongs to the universal ribosomal protein uS14 family. In terms of assembly, part of the 30S ribosomal subunit. Contacts proteins S3 and S10.

Its function is as follows. Binds 16S rRNA, required for the assembly of 30S particles and may also be responsible for determining the conformation of the 16S rRNA at the A site. This chain is Small ribosomal subunit protein uS14A, found in Staphylococcus saprophyticus subsp. saprophyticus (strain ATCC 15305 / DSM 20229 / NCIMB 8711 / NCTC 7292 / S-41).